The following is a 493-amino-acid chain: Cobyric acid synthase (493 aa).

Residues 246–440 (PIDIAVIKMP…IHGVFDGIVF (195 aa)) form the GATase cobBQ-type domain. C326 serves as the catalytic Nucleophile. The active site involves H432.

It belongs to the CobB/CobQ family. CobQ subfamily.

Its pathway is cofactor biosynthesis; adenosylcobalamin biosynthesis. Functionally, catalyzes amidations at positions B, D, E, and G on adenosylcobyrinic A,C-diamide. NH(2) groups are provided by glutamine, and one molecule of ATP is hydrogenolyzed for each amidation. The protein is Cobyric acid synthase of Clostridium botulinum (strain 657 / Type Ba4).